A 110-amino-acid polypeptide reads, in one-letter code: DNA-binding protein Tneu_1679 (110 aa).

Belongs to the PDCD5 family.

The sequence is that of DNA-binding protein Tneu_1679 from Pyrobaculum neutrophilum (strain DSM 2338 / JCM 9278 / NBRC 100436 / V24Sta) (Thermoproteus neutrophilus).